The following is a 481-amino-acid chain: tRNA-2-methylthio-N(6)-dimethylallyladenosine synthase (481 aa).

Residues 24-140 (KKLFIESYGC…LPNLLAEVEE (117 aa)) enclose the MTTase N-terminal domain. The [4Fe-4S] cluster site is built by Cys33, Cys69, Cys103, Cys178, Cys182, and Cys185. Positions 164 to 411 (MSNGITALVS…DLQQKHAWFR (248 aa)) constitute a Radical SAM core domain. The TRAM domain occupies 413–476 (EEFVGKTVEV…SGTLKGEAVG (64 aa)).

The protein belongs to the methylthiotransferase family. MiaB subfamily. Monomer. [4Fe-4S] cluster serves as cofactor.

It localises to the cytoplasm. The catalysed reaction is N(6)-dimethylallyladenosine(37) in tRNA + (sulfur carrier)-SH + AH2 + 2 S-adenosyl-L-methionine = 2-methylsulfanyl-N(6)-dimethylallyladenosine(37) in tRNA + (sulfur carrier)-H + 5'-deoxyadenosine + L-methionine + A + S-adenosyl-L-homocysteine + 2 H(+). Catalyzes the methylthiolation of N6-(dimethylallyl)adenosine (i(6)A), leading to the formation of 2-methylthio-N6-(dimethylallyl)adenosine (ms(2)i(6)A) at position 37 in tRNAs that read codons beginning with uridine. This Flavobacterium johnsoniae (strain ATCC 17061 / DSM 2064 / JCM 8514 / BCRC 14874 / CCUG 350202 / NBRC 14942 / NCIMB 11054 / UW101) (Cytophaga johnsonae) protein is tRNA-2-methylthio-N(6)-dimethylallyladenosine synthase.